The primary structure comprises 30 residues: Cytochrome b6-f complex subunit 8 (30 aa).

The chain crosses the membrane as a helical span at residues 4–24; that stretch reads IISLGWGSLLAIFSFSIALVV.

It belongs to the PetN family. As to quaternary structure, the 4 large subunits of the cytochrome b6-f complex are cytochrome b6, subunit IV (17 kDa polypeptide, PetD), cytochrome f and the Rieske protein, while the 4 small subunits are PetG, PetL, PetM and PetN. The complex functions as a dimer.

It localises to the plastid. It is found in the chloroplast thylakoid membrane. Component of the cytochrome b6-f complex, which mediates electron transfer between photosystem II (PSII) and photosystem I (PSI), cyclic electron flow around PSI, and state transitions. This chain is Cytochrome b6-f complex subunit 8, found in Gracilaria tenuistipitata var. liui (Red alga).